Here is a 1836-residue protein sequence, read N- to C-terminus: U3 small nucleolar RNA-associated protein 10 (1836 aa).

The stretch at 245–283 (EVVGFLLLPSKYETLRNIDVDTRLTAYSIIAVLASIIPI) is one HEAT 1 repeat. Residues 453–473 (SNSSVRDSDDVEFDAGEEDNN) are disordered. Residues 461 to 473 (DDVEFDAGEEDNN) show a composition bias toward acidic residues. HEAT repeat units lie at residues 585-623 (PLDL…TTTS) and 813-850 (VENR…DQDL). Residues 863–883 (QIPEQGPAKRRRRSSSSTKQA) form a disordered region. 2 helical membrane-spanning segments follow: residues 998 to 1018 (LLLV…HSVM) and 1085 to 1105 (LFTY…LLFL). HEAT repeat units follow at residues 1333 to 1372 (ESVL…KFGA), 1749 to 1787 (ETLV…KMGE), and 1790 to 1828 (LTYL…NVLG).

The protein belongs to the HEATR1/UTP10 family. As to quaternary structure, component of the ribosomal small subunit (SSU) processome.

It localises to the nucleus. The protein resides in the nucleolus. It is found in the membrane. In terms of biological role, involved in nucleolar processing of pre-18S ribosomal RNA. Involved in ribosome biosynthesis. This Scheffersomyces stipitis (strain ATCC 58785 / CBS 6054 / NBRC 10063 / NRRL Y-11545) (Yeast) protein is U3 small nucleolar RNA-associated protein 10.